The primary structure comprises 266 residues: Tryptophan synthase alpha chain (266 aa).

Catalysis depends on proton acceptor residues glutamate 45 and aspartate 56.

The protein belongs to the TrpA family. In terms of assembly, tetramer of two alpha and two beta chains.

The enzyme catalyses (1S,2R)-1-C-(indol-3-yl)glycerol 3-phosphate + L-serine = D-glyceraldehyde 3-phosphate + L-tryptophan + H2O. Its pathway is amino-acid biosynthesis; L-tryptophan biosynthesis; L-tryptophan from chorismate: step 5/5. The alpha subunit is responsible for the aldol cleavage of indoleglycerol phosphate to indole and glyceraldehyde 3-phosphate. The polypeptide is Tryptophan synthase alpha chain (Novosphingobium aromaticivorans (strain ATCC 700278 / DSM 12444 / CCUG 56034 / CIP 105152 / NBRC 16084 / F199)).